The primary structure comprises 137 residues: MSSKMIDKLMSFFGIDEPEEEKEEVDSLQPVIPYDRKPKIVNIHTQPQVKVLILKPEKFEQVMNICNELKNKKPVIVDLQKMDKNEAQRVVDFLSGAAYALNGEIKKISGYIFLVAPENFDITGDIKDEVNSLYNLN.

The protein belongs to the SepF family. In terms of assembly, homodimer. Interacts with FtsZ.

Its subcellular location is the cytoplasm. Its function is as follows. Cell division protein that is part of the divisome complex and is recruited early to the Z-ring. Probably stimulates Z-ring formation, perhaps through the cross-linking of FtsZ protofilaments. Its function overlaps with FtsA. The polypeptide is Cell division protein SepF (Thermoanaerobacter pseudethanolicus (strain ATCC 33223 / 39E) (Clostridium thermohydrosulfuricum)).